Here is a 445-residue protein sequence, read N- to C-terminus: MDIKQVTETIAMIEEQNFDVRTITMGISLLDCIDSNIEKAAEKVYHKIVTKAGKLVQVGDDISAELGIPIVNKRVSVTPISIIGAATDATDYVPLAKALDRAAKEIGVNFIGGFSALVQKGYQKGDEILINSIPKALAETDFVCSSVNIGSTKSGINMTAVRDMGRIIKETSAASEMGPAKLVVFANAVEDNPFMAGAFHGVGEADVVINVGVSGPGVVKRALEKVRGQSFDVVAETVKKTAFKITRIGQLVGSLASERLGVKFGIVDLSLAPTPAVGDSVARVLEEMGLETIGTHGTTAALALLNDQVKKGGVMACNQVGGLSGAFIPVSEDEGMIAAVQEGALNLEKLEAMTAICSVGLDMIAIPANTPDTTIAAMIADEAAIGVINQKTTAVRIIPKGKEGDMIEFGGLLGYAPVMPVNKKSSADFIARGGQIPAPIHSFKN.

This sequence belongs to the UPF0210 family. As to quaternary structure, homodimer.

This Streptococcus mutans serotype c (strain ATCC 700610 / UA159) protein is UPF0210 protein SMU_73.